A 435-amino-acid polypeptide reads, in one-letter code: 3-phosphoshikimate 1-carboxyvinyltransferase (435 aa).

The 3-phosphoshikimate site is built by lysine 28, serine 29, and arginine 33. Lysine 28 is a binding site for phosphoenolpyruvate. Positions 100 and 128 each coordinate phosphoenolpyruvate. 3-phosphoshikimate contacts are provided by serine 173, glutamine 175, aspartate 321, and lysine 348. Glutamine 175 is a binding site for phosphoenolpyruvate. Residue aspartate 321 is the Proton acceptor of the active site. Phosphoenolpyruvate contacts are provided by arginine 352 and arginine 394.

Belongs to the EPSP synthase family. As to quaternary structure, monomer.

The protein localises to the cytoplasm. The catalysed reaction is 3-phosphoshikimate + phosphoenolpyruvate = 5-O-(1-carboxyvinyl)-3-phosphoshikimate + phosphate. It participates in metabolic intermediate biosynthesis; chorismate biosynthesis; chorismate from D-erythrose 4-phosphate and phosphoenolpyruvate: step 6/7. Its function is as follows. Catalyzes the transfer of the enolpyruvyl moiety of phosphoenolpyruvate (PEP) to the 5-hydroxyl of shikimate-3-phosphate (S3P) to produce enolpyruvyl shikimate-3-phosphate and inorganic phosphate. The sequence is that of 3-phosphoshikimate 1-carboxyvinyltransferase from Desulfitobacterium hafniense (strain DSM 10664 / DCB-2).